The following is a 368-amino-acid chain: Cytochrome-c peroxidase IdrP2 (368 aa).

The N-terminal stretch at 1–27 is a signal peptide; that stretch reads MKWHRGRLTQTLGAMGLTATLTVAAQA. 2 consecutive Cytochrome c domains span residues 48–158 and 201–346; these read AMIE…ALWQ and KEAQ…LTLS. The heme c site is built by C70, C73, H74, C216, C219, and H220.

As to quaternary structure, the iodate reductase (Idr) complex is composed of a molybdopterin-dependent iodate reductase (IdrA and IdrB subunits) and two associated peroxidases (IdrP1 and IdrP2). Heme c is required as a cofactor.

The protein localises to the periplasm. The enzyme catalyses 2 Fe(II)-[cytochrome c] + H2O2 + 2 H(+) = 2 Fe(III)-[cytochrome c] + 2 H2O. Involved in iodate respiration. Probably reduces the H(2)O(2) produced by IdrA/IdrB to H(2)O, using a reduced cytochrome c as the electron donor. This Pseudomonas sp. (strain SCT) protein is Cytochrome-c peroxidase IdrP2.